The chain runs to 112 residues: Transmembrane protein 14C (112 aa).

4 helical membrane passes run 7–27 (VVPL…GGII), 32–52 (AGSV…GLGA), 62–82 (VWVF…RFYH), and 88–108 (PAGL…VSMF).

The protein belongs to the TMEM14 family.

It is found in the mitochondrion membrane. Its function is as follows. Required for normal heme biosynthesis. In Homo sapiens (Human), this protein is Transmembrane protein 14C (TMEM14C).